A 348-amino-acid polypeptide reads, in one-letter code: Protein pelota homolog (348 aa).

The protein belongs to the eukaryotic release factor 1 family. Pelota subfamily. As to quaternary structure, monomer. The cofactor is a divalent metal cation.

It is found in the cytoplasm. In terms of biological role, may function in recognizing stalled ribosomes, interact with stem-loop structures in stalled mRNA molecules, and effect endonucleolytic cleavage of the mRNA. May play a role in the release non-functional ribosomes and degradation of damaged mRNAs. Has endoribonuclease activity. The polypeptide is Protein pelota homolog (Methanococcus maripaludis (strain DSM 14266 / JCM 13030 / NBRC 101832 / S2 / LL)).